A 126-amino-acid polypeptide reads, in one-letter code: Small ribosomal subunit protein uS12m (126 aa).

Disordered regions lie at residues 1 to 27 and 106 to 126; these read MPTMNQLVRKGRESKRRTKRTRALNKC and GIPGRRRGRSKYGTKKPKDYI. Composition is skewed to basic residues over residues 12-23 and 109-120; these read RESKRRTKRTRA and GRRRGRSKYGTK.

The protein belongs to the universal ribosomal protein uS12 family.

The protein resides in the mitochondrion. Its function is as follows. Protein S12 is involved in the translation initiation step. In Marchantia polymorpha (Common liverwort), this protein is Small ribosomal subunit protein uS12m (RPS12).